Here is a 66-residue protein sequence, read N- to C-terminus: Large ribosomal subunit protein bL35 (66 aa).

Over residues 1–26 the composition is skewed to basic residues; it reads MPKMKTHRGAAKRFKKTGTGKLKRGH. A disordered region spans residues 1–48; the sequence is MPKMKTHRGAAKRFKKTGTGKLKRGHAYTSHLFANKTQKQKRKLRKAT.

This sequence belongs to the bacterial ribosomal protein bL35 family.

This chain is Large ribosomal subunit protein bL35, found in Geobacillus sp. (strain WCH70).